We begin with the raw amino-acid sequence, 451 residues long: Phosphoglucosamine mutase (451 aa).

The active-site Phosphoserine intermediate is the S102. 4 residues coordinate Mg(2+): S102, D242, D244, and D246. S102 is subject to Phosphoserine.

This sequence belongs to the phosphohexose mutase family. The cofactor is Mg(2+). Post-translationally, activated by phosphorylation.

It catalyses the reaction alpha-D-glucosamine 1-phosphate = D-glucosamine 6-phosphate. In terms of biological role, catalyzes the conversion of glucosamine-6-phosphate to glucosamine-1-phosphate. In Staphylococcus epidermidis (strain ATCC 35984 / DSM 28319 / BCRC 17069 / CCUG 31568 / BM 3577 / RP62A), this protein is Phosphoglucosamine mutase.